Reading from the N-terminus, the 373-residue chain is Methionine import ATP-binding protein MetN 1 (373 aa).

The region spanning 29–270 (ILIDRVRKVY…PRHEVTRRFV (242 aa)) is the ABC transporter domain. ATP is bound at residue 67-74 (GRSGAGKS).

Belongs to the ABC transporter superfamily. Methionine importer (TC 3.A.1.24) family. In terms of assembly, the complex is composed of two ATP-binding proteins (MetN), two transmembrane proteins (MetI) and a solute-binding protein (MetQ).

It localises to the cell inner membrane. The catalysed reaction is L-methionine(out) + ATP + H2O = L-methionine(in) + ADP + phosphate + H(+). It catalyses the reaction D-methionine(out) + ATP + H2O = D-methionine(in) + ADP + phosphate + H(+). Its function is as follows. Part of the ABC transporter complex MetNIQ involved in methionine import. Responsible for energy coupling to the transport system. This Rhodopseudomonas palustris (strain ATCC BAA-98 / CGA009) protein is Methionine import ATP-binding protein MetN 1.